Reading from the N-terminus, the 32-residue chain is Basic phospholipase A2 (32 aa).

Ca(2+) is bound by residues tyrosine 26, glycine 28, and glycine 30.

The protein belongs to the phospholipase A2 family. Group II subfamily. It depends on Ca(2+) as a cofactor. In terms of tissue distribution, expressed by the venom gland.

The protein localises to the secreted. It catalyses the reaction a 1,2-diacyl-sn-glycero-3-phosphocholine + H2O = a 1-acyl-sn-glycero-3-phosphocholine + a fatty acid + H(+). Snake venom phospholipase A2 (PLA2) that inhibits neuromuscular transmission by blocking acetylcholine release from the nerve termini. PLA2 catalyzes the calcium-dependent hydrolysis of the 2-acyl groups in 3-sn-phosphoglycerides. The sequence is that of Basic phospholipase A2 from Gloydius halys (Chinese water mocassin).